A 101-amino-acid polypeptide reads, in one-letter code: Small ribosomal subunit protein uS14 (101 aa).

It belongs to the universal ribosomal protein uS14 family. Part of the 30S ribosomal subunit. Contacts proteins S3 and S10.

Binds 16S rRNA, required for the assembly of 30S particles and may also be responsible for determining the conformation of the 16S rRNA at the A site. The polypeptide is Small ribosomal subunit protein uS14 (Buchnera aphidicola subsp. Baizongia pistaciae (strain Bp)).